We begin with the raw amino-acid sequence, 149 residues long: Urease accessory protein UreE (149 aa).

Belongs to the UreE family.

Its subcellular location is the cytoplasm. Involved in urease metallocenter assembly. Binds nickel. Probably functions as a nickel donor during metallocenter assembly. The sequence is that of Urease accessory protein UreE from Prochlorococcus marinus (strain AS9601).